A 226-amino-acid chain; its full sequence is Enolase-phosphatase E1 (226 aa).

It belongs to the HAD-like hydrolase superfamily. MasA/MtnC family. As to quaternary structure, monomer. Requires Mg(2+) as cofactor.

The enzyme catalyses 5-methylsulfanyl-2,3-dioxopentyl phosphate + H2O = 1,2-dihydroxy-5-(methylsulfanyl)pent-1-en-3-one + phosphate. The protein operates within amino-acid biosynthesis; L-methionine biosynthesis via salvage pathway; L-methionine from S-methyl-5-thio-alpha-D-ribose 1-phosphate: step 3/6. Its pathway is amino-acid biosynthesis; L-methionine biosynthesis via salvage pathway; L-methionine from S-methyl-5-thio-alpha-D-ribose 1-phosphate: step 4/6. In terms of biological role, bifunctional enzyme that catalyzes the enolization of 2,3-diketo-5-methylthiopentyl-1-phosphate (DK-MTP-1-P) into the intermediate 2-hydroxy-3-keto-5-methylthiopentenyl-1-phosphate (HK-MTPenyl-1-P), which is then dephosphorylated to form the acireductone 1,2-dihydroxy-3-keto-5-methylthiopentene (DHK-MTPene). The polypeptide is Enolase-phosphatase E1 (Alcanivorax borkumensis (strain ATCC 700651 / DSM 11573 / NCIMB 13689 / SK2)).